The sequence spans 275 residues: Adaptin ear-binding coat-associated protein 1 (275 aa).

The disordered stretch occupies residues 170-191 (KGGASKPRTARGGGLSLLPPPP). An Omega-N-methylarginine modification is found at arginine 180. Position 211 is a phosphothreonine (threonine 211). 2 short sequence motifs (WXXF motif) span residues 252–255 (WGDF) and 272–275 (WVQF). Positions 254-275 (DFSTASSSVPNQAPQPSNWVQF) are disordered. Polar residues predominate over residues 256-275 (STASSSVPNQAPQPSNWVQF).

The protein belongs to the NECAP family. As to quaternary structure, interacts with AP1G1 and AP2A1 components of the adapter protein complexes AP-1 and AP-2. Interacts with the GAE domain proteins GGA1, GGA2 and GGA3.

It is found in the cytoplasmic vesicle. The protein localises to the clathrin-coated vesicle membrane. It localises to the cell membrane. In terms of biological role, involved in endocytosis. The protein is Adaptin ear-binding coat-associated protein 1 (NECAP1) of Homo sapiens (Human).